The primary structure comprises 257 residues: Meiotically up-regulated gene 14 protein (257 aa).

It localises to the cytoplasm. The protein resides in the nucleus. In terms of biological role, has a role in meiosis. The sequence is that of Meiotically up-regulated gene 14 protein (mug14) from Schizosaccharomyces pombe (strain 972 / ATCC 24843) (Fission yeast).